Consider the following 176-residue polypeptide: NAD(P)H-quinone oxidoreductase subunit I, chloroplastic (176 aa).

2 4Fe-4S ferredoxin-type domains span residues Gly-55–Glu-84 and Leu-95–Glu-124. Positions 64, 67, 70, 74, 104, 107, 110, and 114 each coordinate [4Fe-4S] cluster.

The protein belongs to the complex I 23 kDa subunit family. NDH is composed of at least 16 different subunits, 5 of which are encoded in the nucleus. [4Fe-4S] cluster serves as cofactor.

It is found in the plastid. It localises to the chloroplast thylakoid membrane. It catalyses the reaction a plastoquinone + NADH + (n+1) H(+)(in) = a plastoquinol + NAD(+) + n H(+)(out). It carries out the reaction a plastoquinone + NADPH + (n+1) H(+)(in) = a plastoquinol + NADP(+) + n H(+)(out). Its function is as follows. NDH shuttles electrons from NAD(P)H:plastoquinone, via FMN and iron-sulfur (Fe-S) centers, to quinones in the photosynthetic chain and possibly in a chloroplast respiratory chain. The immediate electron acceptor for the enzyme in this species is believed to be plastoquinone. Couples the redox reaction to proton translocation, and thus conserves the redox energy in a proton gradient. The sequence is that of NAD(P)H-quinone oxidoreductase subunit I, chloroplastic from Populus trichocarpa (Western balsam poplar).